Consider the following 285-residue polypeptide: Protease HtpX homolog (285 aa).

2 consecutive transmembrane segments (helical) span residues 7–27 (TAML…MIGG) and 30–50 (GMTI…WFSD). His131 contacts Zn(2+). The active site involves Glu132. His135 is a binding site for Zn(2+). 2 helical membrane passes run 146-166 (ITAT…FFGG) and 177-197 (IAGI…QMAI). Residue Glu202 coordinates Zn(2+).

The protein belongs to the peptidase M48B family. The cofactor is Zn(2+).

The protein resides in the cell inner membrane. This is Protease HtpX homolog from Burkholderia lata (strain ATCC 17760 / DSM 23089 / LMG 22485 / NCIMB 9086 / R18194 / 383).